The chain runs to 352 residues: Ion-translocating oxidoreductase complex subunit D (352 aa).

Transmembrane regions (helical) follow at residues 20 to 40 (IMLL…WFFG), 44 to 64 (LFQI…VLSL), 78 to 109 (ALLT…IIIA), and 123 to 143 (PAMI…TSWL). Thr-187 carries the post-translational modification FMN phosphoryl threonine. Helical transmembrane passes span 214–234 (VLAG…GVFL), 242–262 (WHIP…GWLF), 267–287 (LASP…FFIL), 301–321 (LIFG…GGYP), and 322–342 (DGVA…DYYT).

It belongs to the NqrB/RnfD family. The complex is composed of six subunits: RsxA, RsxB, RsxC, RsxD, RsxE and RsxG. Requires FMN as cofactor.

It is found in the cell inner membrane. In terms of biological role, part of a membrane-bound complex that couples electron transfer with translocation of ions across the membrane. Required to maintain the reduced state of SoxR. This is Ion-translocating oxidoreductase complex subunit D from Salmonella arizonae (strain ATCC BAA-731 / CDC346-86 / RSK2980).